We begin with the raw amino-acid sequence, 705 residues long: Beta-xylosidase (705 aa).

It belongs to the glycosyl hydrolase 52 family.

It catalyses the reaction Hydrolysis of (1-&gt;4)-beta-D-xylans, to remove successive D-xylose residues from the non-reducing termini.. It participates in glycan degradation; xylan degradation. The polypeptide is Beta-xylosidase (xylA) (Geobacillus stearothermophilus (Bacillus stearothermophilus)).